A 405-amino-acid polypeptide reads, in one-letter code: Proline-rich P65 protein (405 aa).

The disordered stretch occupies residues 1 to 58 (MDINKPGWNQSDQQATAYDPNQQQYYGDGSTYYDPDQAVDPNQAYYPDPNTYPDAAAY). A compositionally biased stretch (polar residues) spans 7 to 25 (GWNQSDQQATAYDPNQQQY). 12 tandem repeats follow at residues 40–45 (DPNQAY), 75–80 (DPNQAY), 83–87 (DPNAY), 89–93 (DPNAY), 95–99 (DPNAY), 101–105 (DPNAY), 107–111 (DPNAY), 119–123 (DPNAY), 140–145 (DPNQAY), 148–152 (DPNAY), 154–158 (DPNAY), and 168–172 (DPNAY). The 12 X 5 AA repeats of D-P-N-Q-A-Y stretch occupies residues 40–172 (DPNQAYYPDP…YVTSTDPNAY (133 aa)).

In terms of processing, the N-terminus is blocked.

The protein localises to the cell membrane. This is Proline-rich P65 protein (p65) from Mycoplasma pneumoniae (strain ATCC 29342 / M129 / Subtype 1) (Mycoplasmoides pneumoniae).